Consider the following 834-residue polypeptide: ENENLGDEILEDFETYWEDVNDRLMVSRMVSDSVIKGIVSAVEQEAAERLVTKDMELANLKEYLQFHEGGLSKTELESFGSLMSQNELESMDFRKCMTLSDVFMEHGKMGEFLDGLRSLAKDEFKKLKKSIDELRGSNSVSNKISRSEMAKLEGILQEKESGIWVQLDKTLDNIRMMVDTVFKRMDVMLQLSKTSLHHWQEEHLIKVELESMVMQCVIRTVQEEFEYKLWDQYAQLCGDRNEKLNAISSLRTELDAVLKSLSSSENGHVTSHGSHDADFFTRKKSSEYVTSTKSVWDGNGKLEDSKTDIPENFDAVTLKHMSKDEMVTYFNNIMTKMKRHHESILQKKTDEYFVLRAEYLNLRGGSVVPHKKDKGESDILRKKIPEIIFKLDDILVENEKHPAFTQETLSFGNLKDRLDNLLSENHQLRDLVKEKKNEVKSLLSQVSDATEKRLQHSLAEAGMLKQIGELNLAMEESLIGGSVREDVYTCFLRDLSGGARNEVEELNLGFNMINESNDTSAGSTRKIEIEDLEMECLIMQEICGVISGEGIKEAKDMLKELYLEHLNEKEIRTSLDTKLIEMENKLKFEVEEKDRLMQMEKLVNEKEKLATDASAALAKERVQSEQVRQELNAAKEFASQQQTLASGCNKEVNVIKGQLAEAVERIEVLKEEVAQLNISLEEKTEELKEANHRANMVLAISEERQTLLSSLESKEIALRKQVEKIIGNINESSKMIADFECRVTGRLKTNNARFEHSFSQMDCLVKKANLLRRTTLLYQQRLEKRCSDLKLAEAEVDLLGDEVDTLLSLVEKIYIALDHYSPVLQHYPGDYGDS.

3 coiled-coil regions span residues S410–H456, S574–I700, and A792–K812.

Interacts with MAF1. Expressed in seedlings, leaves and fruits.

Its subcellular location is the golgi apparatus. The protein localises to the cytoplasm. In Solanum lycopersicum (Tomato), this protein is WPP domain-associated protein (WAP).